A 131-amino-acid chain; its full sequence is Lymphocyte antigen 6C2 (131 aa).

An N-terminal signal peptide occupies residues 1-26 (MDSTHATKSCLLILLVALLCAGRAQG). The region spanning 27-116 (LQCYECYGVP…TAGSTWTMAG (90 aa)) is the UPAR/Ly6 domain. 5 cysteine pairs are disulfide-bonded: Cys-29-Cys-53, Cys-32-Cys-41, Cys-46-Cys-74, Cys-78-Cys-95, and Cys-96-Cys-101. Gly-109 carries the GPI-anchor amidated glycine lipid modification. The propeptide at 110–131 (STWTMAGVLLFSLSSVILQTLL) is removed in mature form.

The protein localises to the cell membrane. The polypeptide is Lymphocyte antigen 6C2 (Ly6c2) (Mus musculus (Mouse)).